Consider the following 583-residue polypeptide: MTTPAGSGNGFGTVSWWGLSPALDLQAESPPVDPDSQSKTEHKIPELDALLLGSVDGRHMLRTLARAMLWPLRRFNFYVLENNLEAVARHMLIFSLALEEPEKMGLQERSETFLELWGNALLRPSVAAFLRAQASHLSNLVPEPDRLEELLPWLSLRPLKFRERDALEAVFRFWSGGEKGPEVFPMSRLWDSRLRHYLGSRYDARRGVADWDLRMKLHDRGAQVIHFHEFRRWRDTGVAFELRDLSAYHVPNRTMASGRLLSHRGERVAARGYWGDIATGPFVAFGIEADDKSLLRTSNGQPVKTASEITQHNVTELFRDVAAWRGPRAIKGNVEETKSPEPDAPAQEPFTIHFLPLDSSQTLHHKTCYRGRFQLLYVSCGMIHLLSPELGACVAPGGNLVVELARYLVDLRPKELKAFSDRVVEIAQAAGFAPHTGTKPSETFARFYKLGDSTRGGGDSAVESGPVPSKVLAPTPESINPPQADQAPSLEVMSPPKVDQTPPLEAMSPPEADQAPPLEAMSPPRADQIPPLEAMSPLQAEVVLPLEAISPPQADLAPPPEVISPVQEALAMSSAIAPLKHVT.

Residues 455-534 (RGGGDSAVES…RADQIPPLEA (80 aa)) are disordered.

Belongs to the DNAAF3 family.

Its subcellular location is the cytoplasm. The protein resides in the dynein axonemal particle. Functionally, required for the assembly of axonemal inner and outer dynein arms. Involved in preassembly of dyneins into complexes before their transport into cilia. The chain is Dynein axonemal assembly factor 3 (Dnaaf3) from Rattus norvegicus (Rat).